A 435-amino-acid chain; its full sequence is Serine--tRNA ligase (435 aa).

Residue 234-236 (TAE) coordinates L-serine. 265 to 267 (RRE) is a binding site for ATP. L-serine is bound at residue E288. An ATP-binding site is contributed by 352 to 355 (EISS). S388 is a binding site for L-serine.

The protein belongs to the class-II aminoacyl-tRNA synthetase family. Type-1 seryl-tRNA synthetase subfamily. In terms of assembly, homodimer. The tRNA molecule binds across the dimer.

It is found in the cytoplasm. It catalyses the reaction tRNA(Ser) + L-serine + ATP = L-seryl-tRNA(Ser) + AMP + diphosphate + H(+). The catalysed reaction is tRNA(Sec) + L-serine + ATP = L-seryl-tRNA(Sec) + AMP + diphosphate + H(+). It functions in the pathway aminoacyl-tRNA biosynthesis; selenocysteinyl-tRNA(Sec) biosynthesis; L-seryl-tRNA(Sec) from L-serine and tRNA(Sec): step 1/1. In terms of biological role, catalyzes the attachment of serine to tRNA(Ser). Is also able to aminoacylate tRNA(Sec) with serine, to form the misacylated tRNA L-seryl-tRNA(Sec), which will be further converted into selenocysteinyl-tRNA(Sec). In Synechococcus sp. (strain JA-2-3B'a(2-13)) (Cyanobacteria bacterium Yellowstone B-Prime), this protein is Serine--tRNA ligase.